A 400-amino-acid chain; its full sequence is Phosphoglycerate kinase (400 aa).

Residues 22–24 (DFN), Arg-38, 61–64 (HLGR), Arg-119, and Arg-152 each bind substrate. Residues Lys-205, Gly-296, Glu-327, and 353-356 (GGDT) contribute to the ATP site.

Belongs to the phosphoglycerate kinase family. As to quaternary structure, monomer.

The protein localises to the cytoplasm. It carries out the reaction (2R)-3-phosphoglycerate + ATP = (2R)-3-phospho-glyceroyl phosphate + ADP. Its pathway is carbohydrate degradation; glycolysis; pyruvate from D-glyceraldehyde 3-phosphate: step 2/5. This chain is Phosphoglycerate kinase, found in Campylobacter jejuni subsp. jejuni serotype O:23/36 (strain 81-176).